Consider the following 417-residue polypeptide: Serine hydroxymethyltransferase (417 aa).

(6S)-5,6,7,8-tetrahydrofolate-binding positions include Leu121 and 125 to 127 (GHL). N6-(pyridoxal phosphate)lysine is present on Lys229. 355-357 (SPF) lines the (6S)-5,6,7,8-tetrahydrofolate pocket.

This sequence belongs to the SHMT family. Homodimer. The cofactor is pyridoxal 5'-phosphate.

It is found in the cytoplasm. The catalysed reaction is (6R)-5,10-methylene-5,6,7,8-tetrahydrofolate + glycine + H2O = (6S)-5,6,7,8-tetrahydrofolate + L-serine. It functions in the pathway one-carbon metabolism; tetrahydrofolate interconversion. It participates in amino-acid biosynthesis; glycine biosynthesis; glycine from L-serine: step 1/1. In terms of biological role, catalyzes the reversible interconversion of serine and glycine with tetrahydrofolate (THF) serving as the one-carbon carrier. This reaction serves as the major source of one-carbon groups required for the biosynthesis of purines, thymidylate, methionine, and other important biomolecules. Also exhibits THF-independent aldolase activity toward beta-hydroxyamino acids, producing glycine and aldehydes, via a retro-aldol mechanism. The protein is Serine hydroxymethyltransferase of Yersinia enterocolitica serotype O:8 / biotype 1B (strain NCTC 13174 / 8081).